A 304-amino-acid chain; its full sequence is Putative S-adenosyl-L-methionine-dependent methyltransferase MUL_0816 (304 aa).

Residues aspartate 130 and 159–160 (DL) contribute to the S-adenosyl-L-methionine site.

Belongs to the UPF0677 family.

In terms of biological role, exhibits S-adenosyl-L-methionine-dependent methyltransferase activity. The chain is Putative S-adenosyl-L-methionine-dependent methyltransferase MUL_0816 from Mycobacterium ulcerans (strain Agy99).